The sequence spans 80 residues: Exodeoxyribonuclease 7 small subunit (80 aa).

The protein belongs to the XseB family. As to quaternary structure, heterooligomer composed of large and small subunits.

It localises to the cytoplasm. It catalyses the reaction Exonucleolytic cleavage in either 5'- to 3'- or 3'- to 5'-direction to yield nucleoside 5'-phosphates.. Bidirectionally degrades single-stranded DNA into large acid-insoluble oligonucleotides, which are then degraded further into small acid-soluble oligonucleotides. The protein is Exodeoxyribonuclease 7 small subunit of Pseudomonas paraeruginosa (strain DSM 24068 / PA7) (Pseudomonas aeruginosa (strain PA7)).